Reading from the N-terminus, the 658-residue chain is Carnitine O-palmitoyltransferase 2, mitochondrial (658 aa).

Residues 1-25 constitute a mitochondrion transit peptide; sequence MVPRLLLRAWPRGPAVGPGAPSRPL. Topologically, residues 26–178 are mitochondrial matrix; sequence SAGSGPGQYL…GLLEPEVFHL (153 aa). Lys-69 bears the N6-succinyllysine mark. An N6-acetyllysine modification is found at Lys-79. At Lys-85 the chain carries N6-succinyllysine. An intramembrane region (note=Mitochondrial inner membrane) is located at residues 179–208; sequence NPAKSDTDTFKRLIRFVPSSLSWYGAYLVN. The Mitochondrial matrix segment spans residues 209-658; it reads AYPLDMSQYF…DALEGKSIKS (450 aa). Lys-239 carries the N6-acetyllysine; alternate modification. Residue Lys-239 is modified to N6-succinyllysine; alternate. Lys-305 bears the N6-acetyllysine mark. His-372 functions as the Proton acceptor in the catalytic mechanism. An N6-acetyllysine; alternate modification is found at Lys-418. Residue Lys-418 is modified to N6-succinyllysine; alternate. An N6-succinyllysine mark is found at Lys-424 and Lys-439. A CoA-binding site is contributed by 452–464; sequence GKEFLKKQKLSPD. (R)-carnitine contacts are provided by Tyr-486, Ser-488, and Thr-499. Residues Lys-510 and Lys-544 each carry the N6-acetyllysine; alternate modification. N6-succinyllysine; alternate occurs at positions 510 and 544.

This sequence belongs to the carnitine/choline acetyltransferase family.

It is found in the mitochondrion inner membrane. It catalyses the reaction (R)-carnitine + hexadecanoyl-CoA = O-hexadecanoyl-(R)-carnitine + CoA. The enzyme catalyses octanoyl-CoA + (R)-carnitine = O-octanoyl-(R)-carnitine + CoA. The catalysed reaction is decanoyl-CoA + (R)-carnitine = O-decanoyl-(R)-carnitine + CoA. It carries out the reaction dodecanoyl-CoA + (R)-carnitine = O-dodecanoyl-R-carnitine + CoA. It catalyses the reaction tetradecanoyl-CoA + (R)-carnitine = O-tetradecanoyl-(R)-carnitine + CoA. The enzyme catalyses (R)-carnitine + octadecanoyl-CoA = O-octadecanoyl-(R)-carnitine + CoA. The catalysed reaction is eicosanoyl-CoA + (R)-carnitine = O-eicosanoyl-(R)-carnitine + CoA. It carries out the reaction (9Z)-tetradecenoyl-CoA + (R)-carnitine = O-(9Z)-tetradecenoyl-(R)-carnitine + CoA. It catalyses the reaction (5Z)-tetradecenoyl-CoA + (R)-carnitine = O-(5Z)-tetradecenoyl-(R)-carnitine + CoA. The enzyme catalyses (R)-carnitine + (9Z)-octadecenoyl-CoA = O-(9Z)-octadecenoyl-(R)-carnitine + CoA. The catalysed reaction is 4,8-dimethylnonanoyl-CoA + (R)-carnitine = O-4,8-dimethylnonanoyl-(R)-carnitine + CoA. Its pathway is lipid metabolism; fatty acid beta-oxidation. In terms of biological role, involved in the intramitochondrial synthesis of acylcarnitines from accumulated acyl-CoA metabolites. Reconverts acylcarnitines back into the respective acyl-CoA esters that can then undergo beta-oxidation, an essential step for the mitochondrial uptake of long-chain fatty acids and their subsequent beta-oxidation in the mitochondrion. Active with medium (C8-C12) and long-chain (C14-C18) acyl-CoA esters. The protein is Carnitine O-palmitoyltransferase 2, mitochondrial (CPT2) of Macaca fascicularis (Crab-eating macaque).